The following is a 490-amino-acid chain: Solute carrier family 2, facilitated glucose transporter member 1 (490 aa).

Residues 1 to 10 (MESGSKMTAR) are Cytoplasmic-facing. Residues 11–32 (LMLAVGGAVLGSLQFGYNTGVI) traverse the membrane as a helical segment. The Extracellular portion of the chain corresponds to 33–65 (NRPQKVIEDFYNHTWLYRYEEPISPATLTTLWS). N-linked (GlcNAc...) asparagine glycosylation is present at Asn-44. The chain crosses the membrane as a helical span at residues 66–86 (LSVAIFSVGGMIGSFSVGLFV). Over 87-89 (NRF) the chain is Cytoplasmic. A helical membrane pass occupies residues 90-111 (GRRNSMLMSNILAFLAAVLMGF). At 112–119 (SKMALSFE) the chain is on the extracellular side. The chain crosses the membrane as a helical span at residues 120–143 (MLILGRFIIGLYSGLTTGFVPMYV). The Cytoplasmic segment spans residues 144–154 (GEVSPTALRGA). A helical membrane pass occupies residues 155–175 (LGTFHQLGIVLGILIAQVFGL). Gln-160 is a D-glucose binding site. Over 176-184 (DLIMGNDSL) the chain is Extracellular. Residues 185–205 (WPLLLGFIFVPALLQCIILPF) traverse the membrane as a helical segment. The Cytoplasmic portion of the chain corresponds to 206 to 270 (APESPRFLLI…LFRSPMYRQP (65 aa)). A helical membrane pass occupies residues 271-292 (ILIAIVLQLSQQLSGINAVFYY). Residues 281-282 (QQ) and Asn-287 each bind D-glucose. The Extracellular segment spans residues 293–305 (STSIFEKSGVEQP). Residues 306-327 (VYATIGSGVVNTAFTVVSLFVV) traverse the membrane as a helical segment. D-glucose is bound at residue Asn-316. The Cytoplasmic portion of the chain corresponds to 328 to 333 (ERAGRR). A helical membrane pass occupies residues 334-354 (TLHLIGLAGMAGCAILMTIAL). At 355–364 (TLLDQMPWMS) the chain is on the extracellular side. The chain crosses the membrane as a helical span at residues 365–387 (YLSIVAIFGFVAFFEIGPGPIPW). D-glucose contacts are provided by Glu-379 and Trp-387. Residues 388-400 (FIVAELFSQGPRP) are Cytoplasmic-facing. The helical transmembrane segment at 401-421 (AAFAVAGLSNWTSNFIVGMGF) threads the bilayer. The Extracellular portion of the chain corresponds to 422–428 (QYIAQLC). Residues 429–449 (GSYVFIIFTVLLVLFFIFTYF) form a helical membrane-spanning segment. The Cytoplasmic portion of the chain corresponds to 450 to 490 (KVPETKGRTFDEIAYRFRQGGASQSDKTPDEFHSLGADSQV). The segment at 470-490 (GASQSDKTPDEFHSLGADSQV) is disordered.

Belongs to the major facilitator superfamily. Sugar transporter (TC 2.A.1.1) family. Glucose transporter subfamily. In terms of assembly, interacts with isoform 1 of BSG. Retinal cones (at protein level).

Its subcellular location is the cell membrane. The protein resides in the photoreceptor inner segment. The enzyme catalyses D-glucose(out) = D-glucose(in). Functionally, facilitative glucose transporter, which is responsible for constitutive or basal glucose uptake. Has a very broad substrate specificity; can transport a wide range of aldoses including both pentoses and hexoses. Most important energy carrier of the brain: present at the blood-brain barrier and assures the energy-independent, facilitative transport of glucose into the brain. In association with BSG and NXNL1, promotes retinal cone survival by increasing glucose uptake into photoreceptors. Required for mesendoderm differentiation. The sequence is that of Solute carrier family 2, facilitated glucose transporter member 1 from Gallus gallus (Chicken).